A 471-amino-acid chain; its full sequence is Glutamate--tRNA ligase 2 (471 aa).

The short motif at 15–25 (PSPTGYLHIGG) is the 'HIGH' region element. The 'KMSKS' region signature appears at 243 to 247 (KLSKR). Lys246 is an ATP binding site.

Belongs to the class-I aminoacyl-tRNA synthetase family. Glutamate--tRNA ligase type 1 subfamily. As to quaternary structure, monomer.

The protein resides in the cytoplasm. It catalyses the reaction tRNA(Glu) + L-glutamate + ATP = L-glutamyl-tRNA(Glu) + AMP + diphosphate. In terms of biological role, catalyzes the attachment of glutamate to tRNA(Glu) in a two-step reaction: glutamate is first activated by ATP to form Glu-AMP and then transferred to the acceptor end of tRNA(Glu). The sequence is that of Glutamate--tRNA ligase 2 from Cereibacter sphaeroides (strain ATCC 17025 / ATH 2.4.3) (Rhodobacter sphaeroides).